The chain runs to 144 residues: Small ribosomal subunit protein uS12 (144 aa).

Residue Asp-103 is modified to 3-methylthioaspartic acid. Residues 125-144 (QQGRSRYGAKKGKAAPAKKK) are disordered. The span at 131–144 (YGAKKGKAAPAKKK) shows a compositional bias: basic residues.

Belongs to the universal ribosomal protein uS12 family. As to quaternary structure, part of the 30S ribosomal subunit. Contacts proteins S8 and S17. May interact with IF1 in the 30S initiation complex.

In terms of biological role, with S4 and S5 plays an important role in translational accuracy. Its function is as follows. Interacts with and stabilizes bases of the 16S rRNA that are involved in tRNA selection in the A site and with the mRNA backbone. Located at the interface of the 30S and 50S subunits, it traverses the body of the 30S subunit contacting proteins on the other side and probably holding the rRNA structure together. The combined cluster of proteins S8, S12 and S17 appears to hold together the shoulder and platform of the 30S subunit. The sequence is that of Small ribosomal subunit protein uS12 from Dehalococcoides mccartyi (strain ATCC BAA-2100 / JCM 16839 / KCTC 5957 / BAV1).